A 341-amino-acid polypeptide reads, in one-letter code: Ketol-acid reductoisomerase (NADP(+)) (341 aa).

The KARI N-terminal Rossmann domain maps to 2–181; that stretch reads AKVYYNGDAN…GAARAGVLET (180 aa). NADP(+) contacts are provided by residues 25–28, Arg-48, Ser-52, and 82–85; these read YGSQ and DEKQ. Residue His-107 is part of the active site. Gly-133 lines the NADP(+) pocket. The KARI C-terminal knotted domain maps to 182–327; that stretch reads TFKEETETDL…RELRSMMPFV (146 aa). Mg(2+) contacts are provided by Asp-190, Glu-194, Glu-226, and Glu-230. Residue Ser-251 coordinates substrate.

This sequence belongs to the ketol-acid reductoisomerase family. Requires Mg(2+) as cofactor.

The enzyme catalyses (2R)-2,3-dihydroxy-3-methylbutanoate + NADP(+) = (2S)-2-acetolactate + NADPH + H(+). It carries out the reaction (2R,3R)-2,3-dihydroxy-3-methylpentanoate + NADP(+) = (S)-2-ethyl-2-hydroxy-3-oxobutanoate + NADPH + H(+). The protein operates within amino-acid biosynthesis; L-isoleucine biosynthesis; L-isoleucine from 2-oxobutanoate: step 2/4. Its pathway is amino-acid biosynthesis; L-valine biosynthesis; L-valine from pyruvate: step 2/4. Involved in the biosynthesis of branched-chain amino acids (BCAA). Catalyzes an alkyl-migration followed by a ketol-acid reduction of (S)-2-acetolactate (S2AL) to yield (R)-2,3-dihydroxy-isovalerate. In the isomerase reaction, S2AL is rearranged via a Mg-dependent methyl migration to produce 3-hydroxy-3-methyl-2-ketobutyrate (HMKB). In the reductase reaction, this 2-ketoacid undergoes a metal-dependent reduction by NADPH to yield (R)-2,3-dihydroxy-isovalerate. The chain is Ketol-acid reductoisomerase (NADP(+)) from Geobacillus kaustophilus (strain HTA426).